We begin with the raw amino-acid sequence, 22 residues long: Peptide PGLa-R1 (22 aa).

Leu22 carries the leucine amide modification.

In terms of tissue distribution, expressed by the skin glands.

Its subcellular location is the secreted. Antimicrobial peptide. In Xenopus ruwenzoriensis (Uganda clawed frog), this protein is Peptide PGLa-R1.